Reading from the N-terminus, the 197-residue chain is Endonuclease V (197 aa).

Mg(2+)-binding residues include D37 and E101.

It belongs to the endonuclease V family. Mg(2+) is required as a cofactor.

The protein localises to the cytoplasm. The enzyme catalyses Endonucleolytic cleavage at apurinic or apyrimidinic sites to products with a 5'-phosphate.. Its function is as follows. DNA repair enzyme involved in the repair of deaminated bases. Selectively cleaves double-stranded DNA at the second phosphodiester bond 3' to a deoxyinosine leaving behind the intact lesion on the nicked DNA. The protein is Endonuclease V of Thermococcus kodakarensis (strain ATCC BAA-918 / JCM 12380 / KOD1) (Pyrococcus kodakaraensis (strain KOD1)).